The chain runs to 201 residues: Lipopolysaccharide core heptose(II)-phosphate phosphatase (201 aa).

The N-terminal stretch at 1–35 (MLAFTLRFIKNKRYLATLAGALVIIAGLTSQHAWS) is a signal peptide.

The protein belongs to the phosphoglycerate mutase family. Ais subfamily.

It localises to the periplasm. It participates in bacterial outer membrane biogenesis; lipopolysaccharide metabolism. Functionally, catalyzes the dephosphorylation of heptose(II) of the outer membrane lipopolysaccharide core. The protein is Lipopolysaccharide core heptose(II)-phosphate phosphatase of Salmonella schwarzengrund (strain CVM19633).